We begin with the raw amino-acid sequence, 100 residues long: MNLTPREKDKLLIAMAAEVARKRRARGVKLNHPEAIALISDAVVEGARDGRSVADLMQAGAEVIRAEDCMEGIAQMILEVQVEATFPDGTKLVTVHNPIR.

Belongs to the urease gamma subunit family. In terms of assembly, heterotrimer of UreA (gamma), UreB (beta) and UreC (alpha) subunits. Three heterotrimers associate to form the active enzyme.

The protein resides in the cytoplasm. The catalysed reaction is urea + 2 H2O + H(+) = hydrogencarbonate + 2 NH4(+). It functions in the pathway nitrogen metabolism; urea degradation; CO(2) and NH(3) from urea (urease route): step 1/1. The sequence is that of Urease subunit gamma from Ruegeria pomeroyi (strain ATCC 700808 / DSM 15171 / DSS-3) (Silicibacter pomeroyi).